We begin with the raw amino-acid sequence, 507 residues long: ATP synthase subunit alpha (507 aa).

Position 170-177 (170-177 (GDRQTGKT)) interacts with ATP.

The protein belongs to the ATPase alpha/beta chains family. As to quaternary structure, F-type ATPases have 2 components, CF(1) - the catalytic core - and CF(0) - the membrane proton channel. CF(1) has five subunits: alpha(3), beta(3), gamma(1), delta(1), epsilon(1). CF(0) has three main subunits: a(1), b(2) and c(9-12). The alpha and beta chains form an alternating ring which encloses part of the gamma chain. CF(1) is attached to CF(0) by a central stalk formed by the gamma and epsilon chains, while a peripheral stalk is formed by the delta and b chains.

Its subcellular location is the cell inner membrane. The catalysed reaction is ATP + H2O + 4 H(+)(in) = ADP + phosphate + 5 H(+)(out). Functionally, produces ATP from ADP in the presence of a proton gradient across the membrane. The alpha chain is a regulatory subunit. The polypeptide is ATP synthase subunit alpha (Thermosipho melanesiensis (strain DSM 12029 / CIP 104789 / BI429)).